The chain runs to 462 residues: tRNA modification GTPase MnmE (462 aa).

Residues R34, E92, and K131 each coordinate (6S)-5-formyl-5,6,7,8-tetrahydrofolate. The region spanning 227–386 (GLQVVIAGKP…LIDAITAHAG (160 aa)) is the TrmE-type G domain. A K(+)-binding site is contributed by N237. Residues 237 to 242 (NAGKSS), 256 to 262 (TDIAGTT), and 281 to 284 (DTAG) each bind GTP. S241 is a Mg(2+) binding site. Residues T256, I258, and T261 each contribute to the K(+) site. T262 serves as a coordination point for Mg(2+). K462 lines the (6S)-5-formyl-5,6,7,8-tetrahydrofolate pocket.

This sequence belongs to the TRAFAC class TrmE-Era-EngA-EngB-Septin-like GTPase superfamily. TrmE GTPase family. As to quaternary structure, homodimer. Heterotetramer of two MnmE and two MnmG subunits. The cofactor is K(+).

The protein localises to the cytoplasm. Its function is as follows. Exhibits a very high intrinsic GTPase hydrolysis rate. Involved in the addition of a carboxymethylaminomethyl (cmnm) group at the wobble position (U34) of certain tRNAs, forming tRNA-cmnm(5)s(2)U34. This is tRNA modification GTPase MnmE from Acinetobacter baylyi (strain ATCC 33305 / BD413 / ADP1).